A 781-amino-acid chain; its full sequence is Dual specificity protein kinase zakA (781 aa).

Protein kinase domains follow at residues 9–317 (WEEI…HKLI) and 379–654 (DKDD…EIGL). Residues 15–23 (IGEGQYGRV) and Lys44 contribute to the ATP site. Asp132 acts as the Proton acceptor in catalysis. The disordered stretch occupies residues 168 to 209 (ETTNNNNNPNNNNNNNNNNNNNNNNNNNNNNNNNNINNINNN). Residues 171-209 (NNNNNPNNNNNNNNNNNNNNNNNNNNNNNNNNINNINNN) show a composition bias toward low complexity. ATP is bound by residues 385 to 393 (GGAGNFGDV) and Lys406. The active-site Proton acceptor is the Asp507.

The protein in the N-terminal section; belongs to the protein kinase superfamily. Ser/Thr protein kinase family. It in the C-terminal section; belongs to the protein kinase superfamily. TKL Tyr protein kinase family. In terms of processing, N-terminal serine/threonine domain is capable of autophosphorylation, in vitro, but to a lower extent than the tyrosine kinase domain. May function as a negative regulator of the tyrosine kinase domain. C-terminal tyrosine kinase domain is capable of autophosphorylation, in vitro. In terms of tissue distribution, zakA and zak2 are coexpressed in prestalk cell population, zakA is enriched in pstB populations and zak1 in pstA populations. ZakA and zak2 are coexpressed in prespore cells, zakA expression levels are 10 fold higher than zak2.

It catalyses the reaction L-seryl-[protein] + ATP = O-phospho-L-seryl-[protein] + ADP + H(+). It carries out the reaction L-threonyl-[protein] + ATP = O-phospho-L-threonyl-[protein] + ADP + H(+). The catalysed reaction is L-tyrosyl-[protein] + ATP = O-phospho-L-tyrosyl-[protein] + ADP + H(+). Its function is as follows. Positive regulator of gsk3/gskA activity required for cell pattern formation and a downstream effector of carC. The kinases, gsk3/gskA, zakA and zak2, form part of a signaling pathway that responds to extracellular cyclic AMP. The pathway has a role in transcriptional regulation; required to direct prespore/spore fates during development. ZakA negatively regulates prestalk differentiation by regulating expression of ecmB. Phosphorylates Y-214 of gsk3/gskA, in vitro. The polypeptide is Dual specificity protein kinase zakA (zakA) (Dictyostelium discoideum (Social amoeba)).